A 725-amino-acid chain; its full sequence is Catalase B (725 aa).

A signal peptide spans 1-15 (MRALSLASLIGIASA). Residues 16–27 (ACPYMTGELERR) constitute a propeptide that is removed on maturation. Residue asparagine 50 is glycosylated (N-linked (GlcNAc...) asparagine). Histidine 101 is a catalytic residue. Asparagine 119 carries an N-linked (GlcNAc...) asparagine glycan. Residue asparagine 174 is part of the active site. A heme-binding site is contributed by tyrosine 388. Asparagine 447, asparagine 550, and asparagine 645 each carry an N-linked (GlcNAc...) asparagine glycan.

Belongs to the catalase family. Homotetramer. Heme is required as a cofactor.

It localises to the secreted. It catalyses the reaction 2 H2O2 = O2 + 2 H2O. Functionally, occurs in almost all aerobically respiring organisms and serves to protect cells from the toxic effects of hydrogen peroxide through its degradation into water and oxygen. The sequence is that of Catalase B (catB) from Aspergillus oryzae (strain ATCC 42149 / RIB 40) (Yellow koji mold).